The following is a 479-amino-acid chain: Solute carrier family 46 member 2 (479 aa).

Residues 1 to 23 lie on the Cytoplasmic side of the membrane; sequence MGPGGTCPWSSRLSGFRVRTWIE. A helical transmembrane segment spans residues 24–44; it reads PVVASTQVAGSLYDAGLLLVV. Residues 45 to 80 lie on the Extracellular side of the membrane; that stretch reads KESFKSEAGGSSNYSANQSLVEYQEDQQQKAISNFN. N-linked (GlcNAc...) asparagine glycans are attached at residues N57 and N61. The chain crosses the membrane as a helical span at residues 81–101; the sequence is IIYNLVLGLTPLLSAYGLGWL. The Cytoplasmic segment spans residues 102–110; sequence SDRYHRKIS. A helical membrane pass occupies residues 111–131; sequence ICTAMLGFLLSRIGLLLKVML. Residues 132–140 are Extracellular-facing; the sequence is DWPVEVMYG. Residues 141 to 161 form a helical membrane-spanning segment; that stretch reads AAALNGLCGSFSAYWSGVMAL. The Cytoplasmic portion of the chain corresponds to 162-174; it reads GSLGCSEGRRSVR. A helical transmembrane segment spans residues 175–195; it reads LILIDLVLGLAGFSGSMASGH. Topologically, residues 196-207 are extracellular; the sequence is LFKQIVGHSAQG. The helical transmembrane segment at 208–228 threads the bilayer; it reads LLLTACSVGCAAFALFYSLFV. Residues 229–281 are Cytoplasmic-facing; the sequence is LKVPESKPNKVHPTVDTVSGMMGTYRTLDPDQQDKQNVPRNPRTPGKGKSSQR. A disordered region spans residues 255 to 277; that stretch reads TLDPDQQDKQNVPRNPRTPGKGK. The chain crosses the membrane as a helical span at residues 282–302; it reads EVVALLFVGAIIYDLAAVGTV. Topologically, residues 303–321 are extracellular; sequence DVMALFVLKEPLHWNQVQL. Residues 322-342 form a helical membrane-spanning segment; it reads GYGMASGYIIFITSFLGVLVF. At 343-348 the chain is on the cytoplasmic side; that stretch reads SRCFRD. Residues 349–369 traverse the membrane as a helical segment; sequence TTMIIIGMLSFGSGALLLAFV. The Extracellular portion of the chain corresponds to 370–371; sequence KE. Residues 372 to 392 form a helical membrane-spanning segment; that stretch reads TYMFYIARAIMLFALIPITTI. Residues 393-407 are Cytoplasmic-facing; sequence RSAMSKLIKDSSYGK. Residues 408–428 form a helical membrane-spanning segment; the sequence is IFVILQLCLTLTGVVTSTIYN. The Extracellular portion of the chain corresponds to 429 to 441; it reads KIYQLTLDKFIGT. The helical transmembrane segment at 442 to 462 threads the bilayer; sequence CFVLSSFLSFLAIVPIGVVAY. The Cytoplasmic portion of the chain corresponds to 463-479; the sequence is KQVPRSQQGECAEKQRS.

This sequence belongs to the major facilitator superfamily. SLC46A family. In terms of processing, glycosylated. In terms of tissue distribution, expressed on cortical epithelial cells in the thymus. Mainly expressed in the thymic cortex and is highly enriched in SCID thymus. Also expressed in lymph nodes, heart, fetal liver, brain, spleen, intestine and kidney, but not in adult liver, skin, skeletal muscle and lung. Expressed in skin epidermis.

The protein resides in the endosome membrane. It localises to the cell membrane. It catalyses the reaction N-acetyl-beta-D-glucosaminyl-(1-&gt;4)-1,6-anhydro-N-acetyl-beta-D-muramoyl-L-alanyl-gamma-D-glutamyl-meso-2,6-diaminopimeloyl-D-alanine(out) + n H(+)(out) = N-acetyl-beta-D-glucosaminyl-(1-&gt;4)-1,6-anhydro-N-acetyl-beta-D-muramoyl-L-alanyl-gamma-D-glutamyl-meso-2,6-diaminopimeloyl-D-alanine(in) + n H(+)(in). It carries out the reaction L-alanyl-gamma-D-glutamyl-meso-2,6-diaminopimelate(out) + n H(+)(out) = L-alanyl-gamma-D-glutamyl-meso-2,6-diaminopimelate(in) + n H(+)(in). The enzyme catalyses N-acetyl-D-muramoyl-L-alanyl-D-isoglutamine(out) + n H(+)(out) = N-acetyl-D-muramoyl-L-alanyl-D-isoglutamine(in) + n H(+)(in). The catalysed reaction is 2',3'-cGAMP(out) + n H(+)(out) = 2',3'-cGAMP(in) + n H(+)(in). It catalyses the reaction 3',3'-cGAMP(out) + n H(+)(out) = 3',3'-cGAMP(in) + n H(+)(in). Down-regulated by the anti-inflammatory drug methotrexate. Functionally, proton-coupled transporter that delivers pathogen-associated or danger-associated molecular patterns to cytosolic pattern recognition receptors as part of the innate immune response to microbes or tissue injury. Has selectivity toward muropeptides that contain the amino acid diaminopimelic acid (DAP-type peptidoglycan muropeptides) including Tri-DAP and tracheal toxin (TCT), common in Gram-negative bacteria and Gram-positive bacilli. In the context of immune recognition of skin microbiota, shuttles bacterial muropeptides across the endolysosomal membranes into the cytosol for recognition by NOD1, triggering MYD88-dependent secretion of IL1A and neutrophil recruitment in a pyroptosis-type inflammatory process. To a lesser extent and redundantly, transports muramyl dipeptides derived from most bacterial proteoglycans, eliciting NOD2 receptor activation and downstream inflammatory responses. Postulated to function as an importer of cyclic GMP-AMP dinucleotides (cGAMPs) in monocyte and macrophage cell lineages. Selectively imports cGAMPs derived from pathogenic bacteria such as 3'3'-cGAMP thus providing for differential immune recognition of pathogenic versus commensal bacteria. During tumorigenesis may transport extracellular tumor-derived 2'3'-cGAMP across the plasma membrane of M1-polarized macrophages to activate the anti-tumoral stimulator of interferon genes (STING) pathway. The transport mechanism, its electrogenicity and stoichiometry remain to be elucidated. The chain is Solute carrier family 46 member 2 from Mus musculus (Mouse).